A 665-amino-acid polypeptide reads, in one-letter code: Probable potassium transport system protein Kup (665 aa).

12 consecutive transmembrane segments (helical) span residues 15 to 35 (SFLI…LYVM), 48 to 68 (ITPD…TLLT), 100 to 120 (WLII…MLTP), 147 to 167 (IIII…HFGT), 173 to 193 (IFGP…IVNL), 219 to 239 (LGFF…ALYS), 251 to 271 (LTWP…AAWI), 292 to 312 (MMPS…AIIA), 348 to 368 (IYMP…VLYF), 378 to 398 (YGLS…NYLL), 403 to 423 (PLPI…SFLI), and 431 to 451 (KGGF…YIWI).

The protein belongs to the HAK/KUP transporter (TC 2.A.72) family.

It localises to the cell membrane. It carries out the reaction K(+)(in) + H(+)(in) = K(+)(out) + H(+)(out). Its function is as follows. Transport of potassium into the cell. Likely operates as a K(+):H(+) symporter. This Clostridium perfringens (strain ATCC 13124 / DSM 756 / JCM 1290 / NCIMB 6125 / NCTC 8237 / Type A) protein is Probable potassium transport system protein Kup.